Consider the following 372-residue polypeptide: Biglycan (372 aa).

The signal sequence occupies residues 1–19 (MPTMWPLWLLASLLALSQA). Residues 20-40 (LPFEQKGFWDFTLDDGLPMLN) constitute a propeptide that is removed on maturation. O-linked (Xyl...) (glycosaminoglycan) serine glycosylation is found at S45 and S51. Cystine bridges form between C67/C73 and C71/C80. LRR repeat units follow at residues 86-106 (KAVP…NNEI), 107-130 (SELR…NNKI), 131-154 (SKIH…KNHL), 155-175 (VEIP…DNRI), 176-199 (RKVP…GNPL), 200-224 (ENSG…EAKL), 225-245 (TGIP…HNKI), 246-269 (QAIE…HNQI), 270-293 (RMIE…NNKL), 294-316 (SRVP…TNNI), 317-346 (TKVG…NNPV), and 347-372 (PYWE…NYKK). 2 N-linked (GlcNAc...) asparagine glycosylation sites follow: N274 and N315. Residues C325 and C358 are joined by a disulfide bond.

It belongs to the small leucine-rich proteoglycan (SLRP) family. SLRP class I subfamily. In terms of assembly, homodimer. Forms a ternary complex with MFAP2 and ELN. Post-translationally, the two attached glycosaminoglycan chains can be either chondroitin sulfate or dermatan sulfate.

It is found in the secreted. It localises to the extracellular space. Its subcellular location is the extracellular matrix. Functionally, may be involved in collagen fiber assembly. The protein is Biglycan (BGN) of Equus caballus (Horse).